Reading from the N-terminus, the 160-residue chain is MGVYTYENEFTSDIPAPKLFKAFVLDADNLIPKIAPQAIKCAEILEGDGGPGTIKKITFGEGSHYGYVKHKIHSIDKENHTYSYSLIEGDALSDNIEKIDYETKLVSAPHGGTIIKTTSKYHTKGDVEIKEEHVKAGKEKASHLFKLIEGYLKDHPSEYN.

Belongs to the BetVI family. As to quaternary structure, monomer.

The chain is Major strawberry allergen Fra a 1-B from Fragaria ananassa (Strawberry).